Here is an 89-residue protein sequence, read N- to C-terminus: Exodeoxyribonuclease 7 small subunit (89 aa).

Belongs to the XseB family. As to quaternary structure, heterooligomer composed of large and small subunits.

It localises to the cytoplasm. The catalysed reaction is Exonucleolytic cleavage in either 5'- to 3'- or 3'- to 5'-direction to yield nucleoside 5'-phosphates.. Bidirectionally degrades single-stranded DNA into large acid-insoluble oligonucleotides, which are then degraded further into small acid-soluble oligonucleotides. This is Exodeoxyribonuclease 7 small subunit from Chlorobium phaeobacteroides (strain DSM 266 / SMG 266 / 2430).